Reading from the N-terminus, the 168-residue chain is Phosphopantetheine adenylyltransferase (168 aa).

A substrate-binding site is contributed by T14. Residues 14 to 15 (TF) and H22 each bind ATP. K46, L78, and R92 together coordinate substrate. ATP-binding positions include 93–95 (GLR), E103, and 128–134 (YSFISSS).

Belongs to the bacterial CoaD family. Homohexamer. The cofactor is Mg(2+).

It localises to the cytoplasm. It carries out the reaction (R)-4'-phosphopantetheine + ATP + H(+) = 3'-dephospho-CoA + diphosphate. Its pathway is cofactor biosynthesis; coenzyme A biosynthesis; CoA from (R)-pantothenate: step 4/5. Reversibly transfers an adenylyl group from ATP to 4'-phosphopantetheine, yielding dephospho-CoA (dPCoA) and pyrophosphate. In Xanthomonas axonopodis pv. citri (strain 306), this protein is Phosphopantetheine adenylyltransferase.